Reading from the N-terminus, the 193-residue chain is dCTP deaminase (193 aa).

Residues arginine 110–arginine 115, aspartate 128, valine 136–glutamate 138, tyrosine 171, lysine 178, and glutamine 182 each bind dCTP. The active-site Proton donor/acceptor is glutamate 138. The interval arginine 169 to aspartate 193 is disordered.

This sequence belongs to the dCTP deaminase family. Homotrimer.

It catalyses the reaction dCTP + H2O + H(+) = dUTP + NH4(+). Its pathway is pyrimidine metabolism; dUMP biosynthesis; dUMP from dCTP (dUTP route): step 1/2. Its function is as follows. Catalyzes the deamination of dCTP to dUTP. The chain is dCTP deaminase from Salmonella paratyphi B (strain ATCC BAA-1250 / SPB7).